A 441-amino-acid polypeptide reads, in one-letter code: Lysine histidine transporter-like 2 (441 aa).

The Cytoplasmic portion of the chain corresponds to 1–32 (MEKSQSSPTKDASTKQKNVDDWLPITSSRNAK). A helical membrane pass occupies residues 33 to 53 (WWYSAFHNVTAMVGAGVLSLP). Topologically, residues 54–58 (YAMSN) are extracellular. Residues 59–79 (LGWGPGVTIMIMSWLITFYTL) traverse the membrane as a helical segment. Topologically, residues 80–110 (WQMVQMHEMVPGKRFDRYHELGQHAFGEKLG) are cytoplasmic. The helical transmembrane segment at 111–131 (LWIVVPQQLIVEVGVDIVYMV) threads the bilayer. The Extracellular portion of the chain corresponds to 132-155 (TGGKSLKKIHDLLCTDCKNIRTTY). A run of 2 helical transmembrane segments spans residues 156-176 (WIMI…FNSI) and 177-197 (SIVS…AWAT). Residues 198-222 (SVKKGVHPNVDYSSRASTTSGNVFN) lie on the Extracellular side of the membrane. Residues 223–243 (FLNALGDVAFAYAGHNVVLEI) traverse the membrane as a helical segment. At 244-264 (QATIPSTPEKPSKIAMWKGVV) the chain is on the cytoplasmic side. A helical membrane pass occupies residues 265–285 (VAYIVVAICYFPVAFVCYYIF). Residues 286–300 (GNSVDDNILMTLEKP) are Extracellular-facing. Residues 301-321 (IWLIAIANAFVVVHVIGSYQI) traverse the membrane as a helical segment. At 322-347 (YAMPVFDMLETFLVKKMMFAPSFKLR) the chain is on the cytoplasmic side. Residues 348 to 370 (FITRTLYVAFTMFVAICIPFFGG) form a helical membrane-spanning segment. Topologically, residues 371 to 373 (LLG) are extracellular. Residues 374-396 (FFGGFAFAPTTYYLPCIMWLCIK) traverse the membrane as a helical segment. At 397 to 406 (KPKKYGLSWC) the chain is on the cytoplasmic side. Residues 407 to 427 (INWFCIVVGVILTILAPIGGL) form a helical membrane-spanning segment. Residues 428–441 (RTIIISAKNYEFFS) lie on the Extracellular side of the membrane.

It belongs to the amino acid/polyamine transporter 2 family. Amino acid/auxin permease (AAAP) (TC 2.A.18.2) subfamily.

The protein localises to the cell membrane. Amino acid transporter. In Arabidopsis thaliana (Mouse-ear cress), this protein is Lysine histidine transporter-like 2.